The following is a 194-amino-acid chain: uncharacterized protein (194 aa).

Disordered stretches follow at residues 1-21 (MPKG…APPL) and 73-97 (PATV…PWPS). Pro residues predominate over residues 73 to 96 (PATVPPPPPGLGPPSERPCPPPWP).

This is an uncharacterized protein from Mus musculus (Mouse).